A 417-amino-acid polypeptide reads, in one-letter code: D-amino acid dehydrogenase (417 aa).

Residue 3–17 participates in FAD binding; the sequence is IIVLGAGVIGVTSAY.

It belongs to the DadA oxidoreductase family. It depends on FAD as a cofactor.

It carries out the reaction a D-alpha-amino acid + A + H2O = a 2-oxocarboxylate + AH2 + NH4(+). It functions in the pathway amino-acid degradation; D-alanine degradation; NH(3) and pyruvate from D-alanine: step 1/1. Its function is as follows. Oxidative deamination of D-amino acids. The protein is D-amino acid dehydrogenase of Azorhizobium caulinodans (strain ATCC 43989 / DSM 5975 / JCM 20966 / LMG 6465 / NBRC 14845 / NCIMB 13405 / ORS 571).